We begin with the raw amino-acid sequence, 399 residues long: 4-hydroxy-3-methylbut-2-enyl diphosphate reductase (399 aa).

Cys66 lines the [4Fe-4S] cluster pocket. (2E)-4-hydroxy-3-methylbut-2-enyl diphosphate is bound at residue His96. His96 is a binding site for dimethylallyl diphosphate. Residue His96 coordinates isopentenyl diphosphate. Residue Cys157 coordinates [4Fe-4S] cluster. A (2E)-4-hydroxy-3-methylbut-2-enyl diphosphate-binding site is contributed by His185. Dimethylallyl diphosphate is bound at residue His185. Residue His185 participates in isopentenyl diphosphate binding. Glu187 (proton donor) is an active-site residue. A (2E)-4-hydroxy-3-methylbut-2-enyl diphosphate-binding site is contributed by Thr250. Position 288 (Cys288) interacts with [4Fe-4S] cluster. Positions 317, 318, 319, and 380 each coordinate (2E)-4-hydroxy-3-methylbut-2-enyl diphosphate. Dimethylallyl diphosphate contacts are provided by Ser317, Ser318, Asn319, and Ser380. Isopentenyl diphosphate is bound by residues Ser317, Ser318, Asn319, and Ser380.

Belongs to the IspH family. It depends on [4Fe-4S] cluster as a cofactor.

It catalyses the reaction isopentenyl diphosphate + 2 oxidized [2Fe-2S]-[ferredoxin] + H2O = (2E)-4-hydroxy-3-methylbut-2-enyl diphosphate + 2 reduced [2Fe-2S]-[ferredoxin] + 2 H(+). The enzyme catalyses dimethylallyl diphosphate + 2 oxidized [2Fe-2S]-[ferredoxin] + H2O = (2E)-4-hydroxy-3-methylbut-2-enyl diphosphate + 2 reduced [2Fe-2S]-[ferredoxin] + 2 H(+). Its pathway is isoprenoid biosynthesis; dimethylallyl diphosphate biosynthesis; dimethylallyl diphosphate from (2E)-4-hydroxy-3-methylbutenyl diphosphate: step 1/1. The protein operates within isoprenoid biosynthesis; isopentenyl diphosphate biosynthesis via DXP pathway; isopentenyl diphosphate from 1-deoxy-D-xylulose 5-phosphate: step 6/6. Catalyzes the conversion of 1-hydroxy-2-methyl-2-(E)-butenyl 4-diphosphate (HMBPP) into a mixture of isopentenyl diphosphate (IPP) and dimethylallyl diphosphate (DMAPP). Acts in the terminal step of the DOXP/MEP pathway for isoprenoid precursor biosynthesis. This Synechococcus sp. (strain CC9902) protein is 4-hydroxy-3-methylbut-2-enyl diphosphate reductase.